Here is a 337-residue protein sequence, read N- to C-terminus: Methylthioribose-1-phosphate isomerase (337 aa).

Residues 47 to 49 (RGA), arginine 81, and glutamine 184 each bind substrate. The Proton donor role is filled by aspartate 225. A substrate-binding site is contributed by 235–236 (NK).

The protein belongs to the eIF-2B alpha/beta/delta subunits family. MtnA subfamily.

It catalyses the reaction 5-(methylsulfanyl)-alpha-D-ribose 1-phosphate = 5-(methylsulfanyl)-D-ribulose 1-phosphate. It participates in amino-acid biosynthesis; L-methionine biosynthesis via salvage pathway; L-methionine from S-methyl-5-thio-alpha-D-ribose 1-phosphate: step 1/6. Functionally, catalyzes the interconversion of methylthioribose-1-phosphate (MTR-1-P) into methylthioribulose-1-phosphate (MTRu-1-P). This chain is Methylthioribose-1-phosphate isomerase, found in Synechococcus sp. (strain CC9605).